Reading from the N-terminus, the 307-residue chain is Porphobilinogen deaminase (307 aa).

Position 241 is an S-(dipyrrolylmethanemethyl)cysteine (cysteine 241).

Belongs to the HMBS family. As to quaternary structure, monomer. It depends on dipyrromethane as a cofactor.

It catalyses the reaction 4 porphobilinogen + H2O = hydroxymethylbilane + 4 NH4(+). Its pathway is porphyrin-containing compound metabolism; protoporphyrin-IX biosynthesis; coproporphyrinogen-III from 5-aminolevulinate: step 2/4. Functionally, tetrapolymerization of the monopyrrole PBG into the hydroxymethylbilane pre-uroporphyrinogen in several discrete steps. This chain is Porphobilinogen deaminase, found in Macrococcus caseolyticus (strain JCSC5402) (Macrococcoides caseolyticum).